The primary structure comprises 111 residues: Photosystem II reaction center Psb28 protein (111 aa).

Belongs to the Psb28 family. Part of the photosystem II complex.

It localises to the cellular thylakoid membrane. This is Photosystem II reaction center Psb28 protein from Nostoc sp. (strain PCC 7120 / SAG 25.82 / UTEX 2576).